The primary structure comprises 272 residues: Short-chain dehydrogenase/reductase iacC (272 aa).

3 residues coordinate NADP(+): I13, D59, and N88. Active-site proton donor residues include S150 and Y169. NADP(+) is bound by residues Y169, K173, and V202. Residue K173 is the Lowers pKa of active site Tyr of the active site.

The protein belongs to the short-chain dehydrogenases/reductases (SDR) family.

It participates in secondary metabolite biosynthesis. Functionally, short-chain dehydrogenase/reductase; part of the gene cluster that mediates the biosynthesis of iso-A82775C, a enylepoxycyclohexane and biosynthetic precursor of the chloropestolide anticancer natural products. Within the cluster, the prenyltransferase iacE prenylates siccayne to generate pestalodiol E, using dimethylallyl diphosphate (DMAPP) as cosubstrate. The probable oxidoreductase iacF is then involved in the epoxidation of pestalodiol F to pestalodiol F, which is further converted to pestalofone A by the short-chain dehydrogenase/reductase iacG. Iso-A82775C is subsequently generated from pestalofone A by the short-chain dehydrogenase/reductase iacC. Iso-A82775C is further condensed with maldoxin via a Diels-Alder reaction to produce the anticancer natural products chloropestolides A to E. The sequence is that of Short-chain dehydrogenase/reductase iacC from Pestalotiopsis fici (strain W106-1 / CGMCC3.15140).